A 106-amino-acid polypeptide reads, in one-letter code: Cell division topological specificity factor (106 aa).

It belongs to the MinE family.

In terms of biological role, prevents the cell division inhibition by proteins MinC and MinD at internal division sites while permitting inhibition at polar sites. This ensures cell division at the proper site by restricting the formation of a division septum at the midpoint of the long axis of the cell. The chain is Cell division topological specificity factor from Prochlorococcus marinus subsp. pastoris (strain CCMP1986 / NIES-2087 / MED4).